The following is a 338-amino-acid chain: N-acetyl-gamma-glutamyl-phosphate reductase (338 aa).

Residue cysteine 148 is part of the active site.

It belongs to the NAGSA dehydrogenase family. Type 1 subfamily.

The protein localises to the cytoplasm. The enzyme catalyses N-acetyl-L-glutamate 5-semialdehyde + phosphate + NADP(+) = N-acetyl-L-glutamyl 5-phosphate + NADPH + H(+). Its pathway is amino-acid biosynthesis; L-arginine biosynthesis; N(2)-acetyl-L-ornithine from L-glutamate: step 3/4. Its function is as follows. Catalyzes the NADPH-dependent reduction of N-acetyl-5-glutamyl phosphate to yield N-acetyl-L-glutamate 5-semialdehyde. The polypeptide is N-acetyl-gamma-glutamyl-phosphate reductase (Leptospira borgpetersenii serovar Hardjo-bovis (strain JB197)).